The primary structure comprises 387 residues: Probable nitrate transporter NarT (387 aa).

The next 12 membrane-spanning stretches (helical) occupy residues 14 to 34 (TLSLVAGFMAWSIISPLMPFI), 45 to 65 (ISVILAIPVILGSVLRVPFGY), 69 to 89 (IVGAKWVFFWSFIVLLLPIFL), 97 to 117 (GMLMLSGFFLGIGGAIFSVGV), 137 to 157 (GVGNIGTAVSSFCAPVLAGAI), 161 to 181 (NTVRSYLIILSIFAILMFFLG), 211 to 231 (WYFITFGAFVAFGIFLPNFLV), 246 to 266 (GIFIALATFLRPVGGVIGDKF), 268 to 288 (AVQALIIDFVIMIIGALILSL), 294 to 314 (LFTIGCLAISICAGIGNGLIF), 330 to 350 (GIVSMMGGLGGFFPPLVITFV), and 358 to 378 (HLAFFFLAIFGVIALITMIHL).

This sequence belongs to the major facilitator superfamily. Nitrate/nitrite porter (TC 2.A.1.8) family.

The protein localises to the cell membrane. Its function is as follows. Probably required for nitrate uptake under anoxic conditions. Also possibly involved in excretion of nitrite produced by the dissimilatory reduction of nitrate. The sequence is that of Probable nitrate transporter NarT (narT) from Staphylococcus epidermidis (strain ATCC 35984 / DSM 28319 / BCRC 17069 / CCUG 31568 / BM 3577 / RP62A).